A 66-amino-acid polypeptide reads, in one-letter code: Surface composition regulator (66 aa).

The protein belongs to the GlgS family.

Functionally, major determinant of cell surface composition. Negatively regulates motility, adhesion and synthesis of biofilm exopolysaccharides. The chain is Surface composition regulator from Escherichia coli O127:H6 (strain E2348/69 / EPEC).